The primary structure comprises 547 residues: Chaperonin GroEL (547 aa).

Residues 30–33 (TLGP), K51, 87–91 (DGTTT), G415, 479–481 (NAA), and D495 each bind ATP.

This sequence belongs to the chaperonin (HSP60) family. As to quaternary structure, forms a cylinder of 14 subunits composed of two heptameric rings stacked back-to-back. Interacts with the co-chaperonin GroES.

Its subcellular location is the cytoplasm. It catalyses the reaction ATP + H2O + a folded polypeptide = ADP + phosphate + an unfolded polypeptide.. Its function is as follows. Together with its co-chaperonin GroES, plays an essential role in assisting protein folding. The GroEL-GroES system forms a nano-cage that allows encapsulation of the non-native substrate proteins and provides a physical environment optimized to promote and accelerate protein folding. This Marinomonas sp. (strain MWYL1) protein is Chaperonin GroEL.